The sequence spans 541 residues: Amino-acid permease 2 (541 aa).

Positions 1–22 (MSFSPPNKSADATIQITEMTRQ) are enriched in polar residues. A disordered region spans residues 1-43 (MSFSPPNKSADATIQITEMTRQGTPSSGEAAASTPSTSSTESG). The span at 23 to 41 (GTPSSGEAAASTPSTSSTE) shows a compositional bias: low complexity. Transmembrane regions (helical) follow at residues 66–86 (FSFAMSISGVYGTLMSTWIYG), 90–110 (GGAAAIMWSWIIGGAGGWALA), 139–159 (VPFLCWIAGYLNLVGTVAGGA), 188–208 (VVGVMIGLTTIHAMINTLPTA), 214–234 (TSGYVVFHISVLLGACVTLLV), 255–275 (GWSPPGFAFLFGCLTPAWIMT), 301–321 (ATTFTYVIGFFFNLVLVVCMG), 347–367 (PAIFFTLCGFGVMNLVAIPGI), 399–419 (PLIAVWTYAVLEIIINLLGLA), 424–444 (IGAVFNVCTVALNVSYVIPII), 464–484 (VWVNAFAVAWNTFMAVIFFFP), and 496–516 (YAIVVFFFVLIFALVFWYTHG).

It belongs to the amino acid-polyamine-organocation (APC) superfamily.

The protein resides in the membrane. This is Amino-acid permease 2 (aap-2) from Neurospora crassa (strain ATCC 24698 / 74-OR23-1A / CBS 708.71 / DSM 1257 / FGSC 987).